The chain runs to 289 residues: Ribosomal protein L11 methyltransferase (289 aa).

Positions 135, 156, 179, and 225 each coordinate S-adenosyl-L-methionine.

It belongs to the methyltransferase superfamily. PrmA family.

The protein resides in the cytoplasm. The enzyme catalyses L-lysyl-[protein] + 3 S-adenosyl-L-methionine = N(6),N(6),N(6)-trimethyl-L-lysyl-[protein] + 3 S-adenosyl-L-homocysteine + 3 H(+). In terms of biological role, methylates ribosomal protein L11. This is Ribosomal protein L11 methyltransferase from Chlorobaculum parvum (strain DSM 263 / NCIMB 8327) (Chlorobium vibrioforme subsp. thiosulfatophilum).